A 708-amino-acid polypeptide reads, in one-letter code: Protein MICRORCHIDIA 5 (708 aa).

The span at 1–11 shows a compositional bias: polar residues; the sequence is MAESGSTNPKS. The tract at residues 1–47 is disordered; sequence MAESGSTNPKSPSVVPDSTLGGLKRDLRNYHDGDDSNNLSIKKSKTT. The segment covering 23–34 has biased composition (basic and acidic residues); sequence LKRDLRNYHDGD. The stretch at 590 to 665 forms a coiled coil; sequence SVNLEAELQK…LENRQEGVST (76 aa). Residues 672-679 carry the Nuclear localization signal motif; sequence ARRDVTED.

It belongs to the MORC ATPase protein family. Homodimer and heterodimer. Component of an RNA-directed DNA methylation (RdDM) complex. The cofactor is Mg(2+). Mn(2+) serves as cofactor.

The protein resides in the nucleus. Functionally, exhibits ATPase activity. Binds DNA/RNA in a non-specific manner and exhibits endonuclease activity. Probably involved in DNA repair. Involved in RNA-directed DNA methylation (RdDM) as a component of the RdDM machinery and required for gene silencing. May also be involved in the regulation of chromatin architecture to maintain gene silencing. The sequence is that of Protein MICRORCHIDIA 5 from Arabidopsis thaliana (Mouse-ear cress).